We begin with the raw amino-acid sequence, 219 residues long: PKHD-type hydroxylase Mmar10_1675 (219 aa).

The 95-residue stretch at 77-171 folds into the Fe2OG dioxygenase domain; sequence TLSRILVSRY…RVAVVGWVRS (95 aa). 3 residues coordinate Fe cation: His95, Asp97, and His152. Arg162 is a 2-oxoglutarate binding site.

Fe(2+) is required as a cofactor. L-ascorbate serves as cofactor.

This Maricaulis maris (strain MCS10) (Caulobacter maris) protein is PKHD-type hydroxylase Mmar10_1675.